Reading from the N-terminus, the 89-residue chain is Defensin-like protein 197 (89 aa).

The first 26 residues, 1–26, serve as a signal peptide directing secretion; the sequence is MKFVSVFLVLFIFFLVVLEAPEKIEA. 4 disulfides stabilise this stretch: cysteine 33–cysteine 86, cysteine 46–cysteine 70, cysteine 55–cysteine 81, and cysteine 59–cysteine 83.

It belongs to the DEFL family. Protease inhibitor I18 (RTI/MTI-2) subfamily.

The protein resides in the secreted. In Arabidopsis thaliana (Mouse-ear cress), this protein is Defensin-like protein 197 (ATTI6).